We begin with the raw amino-acid sequence, 674 residues long: Penicillin-binding protein activator LpoA (674 aa).

The N-terminal stretch at 1–31 is a signal peptide; the sequence is MLSSTFVRTKAGRSKPVRLTAVIAAALFLAG. A lipid anchor (N-palmitoyl cysteine) is attached at Cys32. Residue Cys32 is the site of S-diacylglycerol cysteine attachment. The segment at 291 to 349 is disordered; sequence GVTPSTPVQQQQPASVPEQAAQPASTDPNANGAVSTSAPDAAPVTAAQPSAPSTAPITP. Residues 292–315 are compositionally biased toward low complexity; the sequence is VTPSTPVQQQQPASVPEQAAQPAS. Positions 316 to 328 are enriched in polar residues; that stretch reads TDPNANGAVSTSA. The segment covering 331-349 has biased composition (low complexity); sequence AAPVTAAQPSAPSTAPITP.

Belongs to the LpoA family. Interacts with PBP1a.

Its subcellular location is the cell outer membrane. Its function is as follows. Regulator of peptidoglycan synthesis that is essential for the function of penicillin-binding protein 1A (PBP1a). The chain is Penicillin-binding protein activator LpoA from Serratia proteamaculans (strain 568).